Reading from the N-terminus, the 479-residue chain is Ribosomal RNA small subunit methyltransferase F (479 aa).

Residues 125–131 (AAAPGSK), Glu149, Gly177, and Asp194 contribute to the S-adenosyl-L-methionine site. The Nucleophile role is filled by Cys247.

The protein belongs to the class I-like SAM-binding methyltransferase superfamily. RsmB/NOP family.

It localises to the cytoplasm. It carries out the reaction cytidine(1407) in 16S rRNA + S-adenosyl-L-methionine = 5-methylcytidine(1407) in 16S rRNA + S-adenosyl-L-homocysteine + H(+). In terms of biological role, specifically methylates the cytosine at position 1407 (m5C1407) of 16S rRNA. The sequence is that of Ribosomal RNA small subunit methyltransferase F from Shigella flexneri serotype 5b (strain 8401).